The following is an 87-amino-acid chain: Small ribosomal subunit protein bS18 (87 aa).

Basic and acidic residues predominate over residues 1–20; sequence MAGKSSGDRRKPIRKGKDGK. The tract at residues 1-24 is disordered; sequence MAGKSSGDRRKPIRKGKDGKNAAP.

The protein belongs to the bacterial ribosomal protein bS18 family. As to quaternary structure, part of the 30S ribosomal subunit. Forms a tight heterodimer with protein bS6.

In terms of biological role, binds as a heterodimer with protein bS6 to the central domain of the 16S rRNA, where it helps stabilize the platform of the 30S subunit. In Leifsonia xyli subsp. xyli (strain CTCB07), this protein is Small ribosomal subunit protein bS18.